The chain runs to 307 residues: UDP-3-O-acyl-N-acetylglucosamine deacetylase (307 aa).

Residues His-78, His-241, and Asp-245 each coordinate Zn(2+). Catalysis depends on His-268, which acts as the Proton donor.

The protein belongs to the LpxC family. It depends on Zn(2+) as a cofactor.

It catalyses the reaction a UDP-3-O-[(3R)-3-hydroxyacyl]-N-acetyl-alpha-D-glucosamine + H2O = a UDP-3-O-[(3R)-3-hydroxyacyl]-alpha-D-glucosamine + acetate. It functions in the pathway glycolipid biosynthesis; lipid IV(A) biosynthesis; lipid IV(A) from (3R)-3-hydroxytetradecanoyl-[acyl-carrier-protein] and UDP-N-acetyl-alpha-D-glucosamine: step 2/6. Catalyzes the hydrolysis of UDP-3-O-myristoyl-N-acetylglucosamine to form UDP-3-O-myristoylglucosamine and acetate, the committed step in lipid A biosynthesis. This chain is UDP-3-O-acyl-N-acetylglucosamine deacetylase, found in Variovorax paradoxus (strain S110).